Consider the following 75-residue polypeptide: Putative membrane protein insertion efficiency factor (75 aa).

This sequence belongs to the UPF0161 family.

It localises to the cell membrane. Could be involved in insertion of integral membrane proteins into the membrane. This is Putative membrane protein insertion efficiency factor from Bacillus cytotoxicus (strain DSM 22905 / CIP 110041 / 391-98 / NVH 391-98).